The following is an 864-amino-acid chain: Leucine--tRNA ligase (864 aa).

Positions 42–52 match the 'HIGH' region motif; sequence PYPSGKLHMGH. The 'KMSKS' region motif lies at 624-628; it reads KMSKS. Lysine 627 serves as a coordination point for ATP.

The protein belongs to the class-I aminoacyl-tRNA synthetase family.

Its subcellular location is the cytoplasm. It carries out the reaction tRNA(Leu) + L-leucine + ATP = L-leucyl-tRNA(Leu) + AMP + diphosphate. The protein is Leucine--tRNA ligase of Burkholderia thailandensis (strain ATCC 700388 / DSM 13276 / CCUG 48851 / CIP 106301 / E264).